The sequence spans 337 residues: F420-dependent glucose-6-phosphate dehydrogenase (337 aa).

D40 is a coenzyme F420-(gamma-Glu)n binding site. The active-site Proton donor is the H41. Coenzyme F420-(gamma-Glu)n contacts are provided by residues T77 and 108-109 (TG). E110 acts as the Proton acceptor in catalysis. Coenzyme F420-(gamma-Glu)n is bound by residues N113, 178-179 (GG), and 181-182 (VV). Residues T196, K199, K260, and R284 each contribute to the substrate site.

The protein belongs to the F420-dependent glucose-6-phosphate dehydrogenase family. In terms of assembly, homodimer.

It catalyses the reaction oxidized coenzyme F420-(gamma-L-Glu)(n) + D-glucose 6-phosphate + H(+) = 6-phospho-D-glucono-1,5-lactone + reduced coenzyme F420-(gamma-L-Glu)(n). Catalyzes the coenzyme F420-dependent oxidation of glucose 6-phosphate (G6P) to 6-phosphogluconolactone. In Rhodococcus hoagii (strain 103S) (Rhodococcus equi), this protein is F420-dependent glucose-6-phosphate dehydrogenase.